The chain runs to 452 residues: MSLMQFSGLLVVWLLSTLFIATLTWFEFRRVRFNFNVFFSLLFLLTFFFGFPLTSVLVFRFDVGVAPPEILLQALLSAACFYGVYYVTYKTRLRKRVVDVPRKPLFTMNRVETHLTWVILMGIALVSVAIFFMHNGFLLFRLHSYSQIFSSEVSGVALKRFFYFFIPAMLVVYFLRQDSKAWLFFLVSTVAFGLLTYMIVGGTRANIIIAFAIFLFIGIIRGWISLWMLAAAGVLGIVGMFWLALKRYGLNVSGDEAFYTFLYLTRDTFSPWENLALLLQNYHNIEFQGLAPIVRDFYVFIPTWLWPGRPSIVLNSANYFTWEVLNNHSGLAISPTLIGSLVVMGGALFIPLGAIVVGMIIKWFDWLYELGNREPNRYKAAILHSFCFGAIFNMIVLAREGLDSFVSRVVFFLVVFGASLLVAKLLFWLFDSAGLIHKRTTSLPQAQVEGKL.

11 consecutive transmembrane segments (helical) span residues 6–26 (FSGL…LTWF), 37–57 (VFFS…TSVL), 63–83 (VGVA…CFYG), 118–138 (VILM…NGFL), 155–175 (GVAL…VYFL), 181–201 (AWLF…MIVG), 207–227 (IIIA…ISLW), 228–248 (MLAA…LKRY), 341–361 (LVVM…GMII), 378–398 (YKAA…IVLA), and 410–430 (VFFL…FWLF).

It belongs to the WzyE family. Probably part of a complex composed of WzxE, WzyE and WzzE.

The protein localises to the cell inner membrane. Its pathway is bacterial outer membrane biogenesis; enterobacterial common antigen biosynthesis. Functionally, probably involved in the polymerization of enterobacterial common antigen (ECA) trisaccharide repeat units. The polypeptide is Probable ECA polymerase (Salmonella newport (strain SL254)).